The chain runs to 188 residues: Probable nicotinate-nucleotide adenylyltransferase (188 aa).

Belongs to the NadD family.

The catalysed reaction is nicotinate beta-D-ribonucleotide + ATP + H(+) = deamido-NAD(+) + diphosphate. Its pathway is cofactor biosynthesis; NAD(+) biosynthesis; deamido-NAD(+) from nicotinate D-ribonucleotide: step 1/1. Its function is as follows. Catalyzes the reversible adenylation of nicotinate mononucleotide (NaMN) to nicotinic acid adenine dinucleotide (NaAD). This is Probable nicotinate-nucleotide adenylyltransferase from Listeria monocytogenes serovar 1/2a (strain ATCC BAA-679 / EGD-e).